A 246-amino-acid chain; its full sequence is ATP synthase subunit a (246 aa).

The propeptide at 1-3 is removed in mature form; sequence MFY. 7 consecutive transmembrane segments (helical) span residues 21–41, 56–76, 82–102, 113–133, 138–158, 184–204, and 206–226; these read LTFSITNYTLYLIIVSLIIIF, WGVSVIAIYDTILNLVNGQIG, YFPLIFTIFNFILIANLISMI, VAVVSFSLTLWIGNVVLGLYL, FFALFVPSGTPLALVPVLVLI, LMLILGSLIISLMSSSFLGFV, and GIIPILAVVAITILEFGIAII.

It belongs to the ATPase A chain family. In terms of assembly, F-type ATPases have 2 components, CF(1) - the catalytic core - and CF(0) - the membrane proton channel. CF(1) has five subunits: alpha(3), beta(3), gamma(1), delta(1), epsilon(1). CF(0) has three main subunits: a, b and c.

The protein localises to the mitochondrion inner membrane. Mitochondrial membrane ATP synthase (F(1)F(0) ATP synthase or Complex V) produces ATP from ADP in the presence of a proton gradient across the membrane which is generated by electron transport complexes of the respiratory chain. F-type ATPases consist of two structural domains, F(1) - containing the extramembraneous catalytic core and F(0) - containing the membrane proton channel, linked together by a central stalk and a peripheral stalk. During catalysis, ATP synthesis in the catalytic domain of F(1) is coupled via a rotary mechanism of the central stalk subunits to proton translocation. Key component of the proton channel; it may play a direct role in the translocation of protons across the membrane. The sequence is that of ATP synthase subunit a (ATP6) from Candida parapsilosis (Yeast).